A 293-amino-acid polypeptide reads, in one-letter code: MKILTPATSANLGPGFDSLGLSLKLYNEVTITKQNFTSVCISGEGSDKIGLKKNNTFVNIFNETMLYLTGKTPNFRFNFINNIPFSRGLGSSSSVIVGAIASAYHMAGFKVDRALVLNQALKYESHPDNISPAVWGGFTSNIVHKGTVYTQKADISSDLRAVVVIPDKPTSTKQSRGKLPKTYPMADVISNVSHAAFLTACFIKQDYENLRLASIDKMHEIRRMHGLKELFRVREIAYLSGALMSNLSGSGSSFLNLAHKDRAQTLRDILQLEFPEFKVEIYELDNNGFILQS.

84–94 (PFSRGLGSSSS) is a binding site for ATP.

This sequence belongs to the GHMP kinase family. Homoserine kinase subfamily.

The protein localises to the cytoplasm. It catalyses the reaction L-homoserine + ATP = O-phospho-L-homoserine + ADP + H(+). The protein operates within amino-acid biosynthesis; L-threonine biosynthesis; L-threonine from L-aspartate: step 4/5. Catalyzes the ATP-dependent phosphorylation of L-homoserine to L-homoserine phosphate. This Campylobacter fetus subsp. fetus (strain 82-40) protein is Homoserine kinase.